A 270-amino-acid polypeptide reads, in one-letter code: tRNA pseudouridine synthase A (270 aa).

Asp52 functions as the Nucleophile in the catalytic mechanism. Tyr110 contributes to the substrate binding site.

It belongs to the tRNA pseudouridine synthase TruA family. In terms of assembly, homodimer.

The enzyme catalyses uridine(38/39/40) in tRNA = pseudouridine(38/39/40) in tRNA. Functionally, formation of pseudouridine at positions 38, 39 and 40 in the anticodon stem and loop of transfer RNAs. This chain is tRNA pseudouridine synthase A, found in Paraburkholderia xenovorans (strain LB400).